Reading from the N-terminus, the 85-residue chain is U4-theraphotoxin-Hhn1a (85 aa).

The N-terminal stretch at 1-22 (MKMTLIAILTCAAVLVLHTTAA) is a signal peptide. A propeptide spanning residues 23–48 (EELEAESQLMEVGMPDTELAAVDEER) is cleaved from the precursor. 3 disulfides stabilise this stretch: Cys-52–Cys-66, Cys-56–Cys-77, and Cys-71–Cys-82.

Belongs to the neurotoxin 12 (Hwtx-2) family. 02 (Hwtx-2) subfamily. As to quaternary structure, monomer. As to expression, expressed by the venom gland.

The protein localises to the secreted. Its function is as follows. Neurotoxin active on both insects and mammals. The chain is U4-theraphotoxin-Hhn1a from Cyriopagopus hainanus (Chinese bird spider).